Consider the following 210-residue polypeptide: N-(5'-phosphoribosyl)anthranilate isomerase (210 aa).

Belongs to the TrpF family.

It catalyses the reaction N-(5-phospho-beta-D-ribosyl)anthranilate = 1-(2-carboxyphenylamino)-1-deoxy-D-ribulose 5-phosphate. Its pathway is amino-acid biosynthesis; L-tryptophan biosynthesis; L-tryptophan from chorismate: step 3/5. This Staphylococcus aureus (strain Mu3 / ATCC 700698) protein is N-(5'-phosphoribosyl)anthranilate isomerase.